The chain runs to 876 residues: Alanine--tRNA ligase (876 aa).

The residue at position 74 (Lys-74) is an N6-acetyllysine. His-564, His-568, Cys-666, and His-670 together coordinate Zn(2+).

This sequence belongs to the class-II aminoacyl-tRNA synthetase family. Homotetramer. It depends on Zn(2+) as a cofactor.

The protein localises to the cytoplasm. It carries out the reaction tRNA(Ala) + L-alanine + ATP = L-alanyl-tRNA(Ala) + AMP + diphosphate. In terms of biological role, catalyzes the attachment of alanine to tRNA(Ala) in a two-step reaction: alanine is first activated by ATP to form Ala-AMP and then transferred to the acceptor end of tRNA(Ala). Also edits incorrectly charged Ser-tRNA(Ala) and Gly-tRNA(Ala) via its editing domain. This chain is Alanine--tRNA ligase, found in Escherichia coli O6:K15:H31 (strain 536 / UPEC).